Consider the following 625-residue polypeptide: Glutamyl-tRNA(Gln) amidotransferase subunit E (625 aa).

The protein belongs to the GatB/GatE family. GatE subfamily. Heterodimer of GatD and GatE.

The enzyme catalyses L-glutamyl-tRNA(Gln) + L-glutamine + ATP + H2O = L-glutaminyl-tRNA(Gln) + L-glutamate + ADP + phosphate + H(+). Allows the formation of correctly charged Gln-tRNA(Gln) through the transamidation of misacylated Glu-tRNA(Gln) in organisms which lack glutaminyl-tRNA synthetase. The reaction takes place in the presence of glutamine and ATP through an activated gamma-phospho-Glu-tRNA(Gln). The GatDE system is specific for glutamate and does not act on aspartate. The sequence is that of Glutamyl-tRNA(Gln) amidotransferase subunit E from Caldivirga maquilingensis (strain ATCC 700844 / DSM 13496 / JCM 10307 / IC-167).